A 686-amino-acid polypeptide reads, in one-letter code: Thymidine kinase (686 aa).

Residues 1–14 (MASNSHNNYNTPRR) are compositionally biased toward polar residues. 2 disordered regions span residues 1–21 (MASNSHNNYNTPRRQNYDVPK) and 64–85 (NPGLKPRGLVRPRQDADNPSSD). 243–250 (GCMAAGKT) is a binding site for ATP. Glutamate 270 functions as the Proton acceptor in the catalytic mechanism. Glutamine 308 is a substrate binding site. An ATP-binding site is contributed by arginine 398. Arginine 404 contacts substrate.

It belongs to the herpesviridae thymidine kinase family. Homodimer.

The catalysed reaction is thymidine + ATP = dTMP + ADP + H(+). Functionally, catalyzes the transfer of the gamma-phospho group of ATP to thymidine to generate dTMP in the salvage pathway of pyrimidine synthesis. The dTMP serves as a substrate for DNA polymerase during viral DNA replication. Allows the virus to be reactivated and to grow in non-proliferative cells lacking a high concentration of phosphorylated nucleic acid precursors. The chain is Thymidine kinase from Alcelaphine herpesvirus 1 (strain WC11) (AlHV-1).